The primary structure comprises 722 residues: Tegument protein UL46 (722 aa).

The tract at residues 423–534 (RLAASGPPGG…AAAARPLAAQ (112 aa)) is disordered. Basic and acidic residues-rich tracts occupy residues 440–451 (CRDKIQRTRRDN) and 474–491 (HRED…DRGP). Pro residues predominate over residues 510–522 (PRLPPRNPAPPEQ). Residues 523–534 (RPAAAARPLAAQ) are compositionally biased toward low complexity.

It belongs to the herpesviridae HHV-1 VP11/12 protein family. As to quaternary structure, interacts with VP16. Interacts with host LCK, PIK3R1, SHC1 AND GRB2; these interactions promote the activation of the PI3K/AKT pathway. Interacts with host YWHAB. Interacts with ICP0; this interaction targets UL46 for degradation by the proteasome. Phosphorylated by host LCK. The phosphorylation seems to be lymphocyte-specific.

It localises to the virion tegument. The protein localises to the host cell membrane. Plays a role in the activation of the host PI3K/AKT pathway to promote cell survival. Interacts with and activates host LCK and thereby recruits downstream partners SHC1, GRB2 and PI3KR1 in order to activate the PI3K pathway by phosphorylating host AKT on its activating residues. This mechanism is inhibited by the viral protein US3 that instead promotes incorporation of UL46 into virions. In Homo sapiens (Human), this protein is Tegument protein UL46.